An 881-amino-acid chain; its full sequence is Alanine--tRNA ligase (881 aa).

Residues histidine 568, histidine 572, cysteine 670, and histidine 674 each coordinate Zn(2+).

The protein belongs to the class-II aminoacyl-tRNA synthetase family. Requires Zn(2+) as cofactor.

It localises to the cytoplasm. The catalysed reaction is tRNA(Ala) + L-alanine + ATP = L-alanyl-tRNA(Ala) + AMP + diphosphate. Catalyzes the attachment of alanine to tRNA(Ala) in a two-step reaction: alanine is first activated by ATP to form Ala-AMP and then transferred to the acceptor end of tRNA(Ala). Also edits incorrectly charged Ser-tRNA(Ala) and Gly-tRNA(Ala) via its editing domain. This chain is Alanine--tRNA ligase, found in Moorella thermoacetica (strain ATCC 39073 / JCM 9320).